We begin with the raw amino-acid sequence, 209 residues long: ATP-dependent Clp protease proteolytic subunit (209 aa).

Residue Ser107 is the Nucleophile of the active site. The active site involves His132.

This sequence belongs to the peptidase S14 family. In terms of assembly, fourteen ClpP subunits assemble into 2 heptameric rings which stack back to back to give a disk-like structure with a central cavity, resembling the structure of eukaryotic proteasomes.

The protein localises to the cytoplasm. It catalyses the reaction Hydrolysis of proteins to small peptides in the presence of ATP and magnesium. alpha-casein is the usual test substrate. In the absence of ATP, only oligopeptides shorter than five residues are hydrolyzed (such as succinyl-Leu-Tyr-|-NHMec, and Leu-Tyr-Leu-|-Tyr-Trp, in which cleavage of the -Tyr-|-Leu- and -Tyr-|-Trp bonds also occurs).. Cleaves peptides in various proteins in a process that requires ATP hydrolysis. Has a chymotrypsin-like activity. Plays a major role in the degradation of misfolded proteins. In Methylobacterium nodulans (strain LMG 21967 / CNCM I-2342 / ORS 2060), this protein is ATP-dependent Clp protease proteolytic subunit.